An 867-amino-acid polypeptide reads, in one-letter code: MDLGSMLYNSFNNITWSTTTLPLDRLISSYRLPQIVKLDSGESVEGLRENDYLLIHSCRQWTTITAHSLEEGHYVIGPKIEIPVHYEGQFKLLEQDRDIKEPVQYYNSVEEVAKAFPERVYVMEEISFNFKMASGESNEDTEVYNITLSTGDELTLMGQAELLYAKSSREKSRFNTIFKRIGKLNSISKLGRGKMPCLICMNHRTNESISLPFQCRGRFSTCSQLELQMQEGEHTIRTIVEKTRLPVNVMVPSSPPRNPHDLHLIREGHRYKLVNIQTKTVVVCCALRSNKILPVHFPLHVSTALPRLLVPEGLLQGESWFETVVHRWFTYCQEQFDIDDYSRAVRDVRVDWIEDGKSPKKSSAGGTGSGSAICNSSGSGSNGCPSHLHLPSSLSSARDELTQSFHRLSVCVYGNNLHGNSEVNLQGCVSLCGDCAPAEPPDADYLFPELQENSSGSLKSDVPYEELWLDHVKNAGPVLDHNEGVRGNSLSSGCTTALPYPKAGPTSALLSADVNLPPPPVPPKSEAVKEECRLLDAPPIPPRSSKQAGSSSATVPYPSAKPRQKDTRSPSPTLSYYSSGLHSIGGEGESQIESDDQNHACYPCSWIRPDASESSKPLPCLNPSVNASFSRLSWPNDFCGADSYKGEDFQSLHCRSYSSYPRKRTPGTPKACPSGLLDFDKRANFEGKAVSSKVQQVTQSAQFCTKSTSYNMDMCRDKPTDECITKQSQSCPILPPRTPKCTDAKKDAEAATTDTADADAVELESKSCSPDGPHPGTTDVFSVSHPVATGLSWQPPSNLSGISIEEISKSLRFIGLSEDVVSLFVQEKIDGNLLLQLTEEILSEDFKLSKLQVKKLMQFINGWRPKM.

The interval 12-322 is CABIT; it reads NNITWSTTTL…GLLQGESWFE (311 aa). A Phosphotyrosine modification is found at Y464. Disordered stretches follow at residues 511-530, 536-594, and 735-758; these read SADV…AVKE, DAPP…QIES, and PPRT…TADA. 2 stretches are compositionally biased toward polar residues: residues 544 to 554 and 569 to 581; these read SSKQAGSSSAT and SPSP…SSGL. Over residues 740–749 the composition is skewed to basic and acidic residues; the sequence is KCTDAKKDAE. An SAM domain is found at 802–867; it reads ISIEEISKSL…QFINGWRPKM (66 aa).

Belongs to the GAREM family.

In terms of biological role, adapter protein that may provide a link between cell surface epidermal growth factor receptor and the MAPK/ERK signaling pathway. May promote cell proliferation. The chain is GRB2-associated and regulator of MAPK protein 1 (garem1) from Danio rerio (Zebrafish).